The primary structure comprises 145 residues: 3-hydroxyacyl-[acyl-carrier-protein] dehydratase FabZ (145 aa).

The active site involves His-48.

Belongs to the thioester dehydratase family. FabZ subfamily.

The protein resides in the cytoplasm. It carries out the reaction a (3R)-hydroxyacyl-[ACP] = a (2E)-enoyl-[ACP] + H2O. Functionally, involved in unsaturated fatty acids biosynthesis. Catalyzes the dehydration of short chain beta-hydroxyacyl-ACPs and long chain saturated and unsaturated beta-hydroxyacyl-ACPs. The chain is 3-hydroxyacyl-[acyl-carrier-protein] dehydratase FabZ from Geobacillus thermodenitrificans (strain NG80-2).